Reading from the N-terminus, the 599-residue chain is Glycerophosphodiester phosphodiesterase domain-containing protein 5 (599 aa).

At 1–42 the chain is on the cytoplasmic side; sequence MVKHQPLQYYEPQLCLSCLTGIYGCRWKRYQRSHDDTTKWER. Intrachain disulfides connect Cys15–Cys18 and Cys25–Cys576. Residues 43–63 traverse the membrane as a helical segment; that stretch reads LWFLILTSSFFLTLVWFYFWW. Over 64–87 the chain is Extracellular; the sequence is EVHNDYNEINWFLYNRMGYWSDWS. A helical membrane pass occupies residues 88-108; it reads IPILVTTAAGFTYITVLLILA. Over 109-125 the chain is Cytoplasmic; sequence LCHIAVGQQMNLHWLHK. The chain crosses the membrane as a helical span at residues 126–146; sequence IGLMTTLITTVVTMSSIAQLW. Residues 147-160 lie on the Extracellular side of the membrane; that stretch reads DDEWEMVFISLQAT. Residues 161-181 form a helical membrane-spanning segment; that stretch reads APFLHIGALAAVTALSWLIAG. Residues 182-192 are Cytoplasmic-facing; that stretch reads QFARMEKATSQ. Residues 193-213 traverse the membrane as a helical segment; that stretch reads MLMVTAYLAVVVALYLVPLTI. The Extracellular segment spans residues 214 to 497; the sequence is SSPCIMEKKA…IWLMPPDEYR (284 aa). Positions 228 to 485 constitute a GP-PDE domain; it reads PAIIGHRGAP…DSSHVLRKVP (258 aa). 5 N-linked (GlcNAc...) asparagine glycosylation sites follow: Asn301, Asn336, Asn352, Asn374, and Asn448. Residues 498-518 traverse the membrane as a helical segment; that stretch reads LIWITSDLISFIIIVGVFIFQ. The Cytoplasmic segment spans residues 519–599; sequence NYHNDQWRLG…DHRDTRLRMN (81 aa).

It belongs to the glycerophosphoryl diester phosphodiesterase family. Interacts with PRDX1; forms a mixed-disulfide with PRDX1, leading to disrupt intramolecular disulfide bond between Cys-25 and Cys-576. Post-translationally, intramolecular disulfide bond between Cys-25 and Cys-576 is reduced by PRDX1. In terms of tissue distribution, detected in mature motor neurons.

Its subcellular location is the endomembrane system. It localises to the cytoplasm. The protein resides in the perinuclear region. It is found in the cell projection. The protein localises to the growth cone. It carries out the reaction a 1,2-diacyl-sn-glycero-3-phospho-(1D-myo-inositol-4,5-bisphosphate) + H2O = 1D-myo-inositol 1,4,5-trisphosphate + a 1,2-diacyl-sn-glycerol + H(+). It catalyses the reaction sn-glycerol 3-phosphocholine + H2O = sn-glycerol 3-phosphate + choline + H(+). Activated by PRDX1 by reduction of an intramolecular disulfide bond. In terms of biological role, glycerophosphodiester phosphodiesterase that promotes cell cycle exit and drives spinal motor neuron differentiation. Mediates the cleavage of glycosylphosphatidylinositol (GPI) anchor of target proteins: removes the GPI-anchor of RECK, leading to release RECK from the plasma membrane. May contribute to the osmotic regulation of cellular glycerophosphocholine. The chain is Glycerophosphodiester phosphodiesterase domain-containing protein 5 (GDPD5) from Gallus gallus (Chicken).